Consider the following 993-residue polypeptide: Nisin biosynthesis protein NisB (993 aa).

The helical transmembrane segment at 838 to 851 threads the bilayer; the sequence is AIFCADSKIIPNLL.

To B.subtilis SpaB and S.epidermidis EpiB.

The protein localises to the cell membrane. Its function is as follows. Involved in the post-translational modification of the lantibiotic nisin. The protein is Nisin biosynthesis protein NisB (nisB) of Lactococcus lactis subsp. lactis (Streptococcus lactis).